Here is a 113-residue protein sequence, read N- to C-terminus: UPF0339 protein MS1092 (113 aa).

Tandem repeats lie at residues 11 to 59 and 62 to 110.

Belongs to the UPF0339 family. Duplicated subfamily.

The polypeptide is UPF0339 protein MS1092 (Mannheimia succiniciproducens (strain KCTC 0769BP / MBEL55E)).